The primary structure comprises 155 residues: Mediator of RNA polymerase II transcription subunit 10 (155 aa).

The tract at residues 54–80 (SSHTQSHAPDADTAQANPSDPPISTIE) is disordered.

The protein belongs to the Mediator complex subunit 10 family. As to quaternary structure, component of the Mediator complex.

The protein resides in the nucleus. Its function is as follows. Component of the Mediator complex, a coactivator involved in the regulated transcription of nearly all RNA polymerase II-dependent genes. Mediator functions as a bridge to convey information from gene-specific regulatory proteins to the basal RNA polymerase II transcription machinery. Mediator is recruited to promoters by direct interactions with regulatory proteins and serves as a scaffold for the assembly of a functional preinitiation complex with RNA polymerase II and the general transcription factors. The sequence is that of Mediator of RNA polymerase II transcription subunit 10 (nut2) from Aspergillus terreus (strain NIH 2624 / FGSC A1156).